A 338-amino-acid chain; its full sequence is Lipoate-protein ligase A (338 aa).

A BPL/LPL catalytic domain is found at 29–216 (PATQRVLFLW…AFFAHYGERV (188 aa)). Residues R71, 76-79 (GAVF), and K134 each bind ATP. Position 134 (K134) interacts with (R)-lipoate.

The protein belongs to the LplA family. Monomer.

It is found in the cytoplasm. It carries out the reaction L-lysyl-[lipoyl-carrier protein] + (R)-lipoate + ATP = N(6)-[(R)-lipoyl]-L-lysyl-[lipoyl-carrier protein] + AMP + diphosphate + H(+). It functions in the pathway protein modification; protein lipoylation via exogenous pathway; protein N(6)-(lipoyl)lysine from lipoate: step 1/2. It participates in protein modification; protein lipoylation via exogenous pathway; protein N(6)-(lipoyl)lysine from lipoate: step 2/2. Its function is as follows. Catalyzes both the ATP-dependent activation of exogenously supplied lipoate to lipoyl-AMP and the transfer of the activated lipoyl onto the lipoyl domains of lipoate-dependent enzymes. This is Lipoate-protein ligase A from Escherichia coli O81 (strain ED1a).